Reading from the N-terminus, the 257-residue chain is UPF0246 protein AHA_3667 (257 aa).

Belongs to the UPF0246 family.

The protein is UPF0246 protein AHA_3667 of Aeromonas hydrophila subsp. hydrophila (strain ATCC 7966 / DSM 30187 / BCRC 13018 / CCUG 14551 / JCM 1027 / KCTC 2358 / NCIMB 9240 / NCTC 8049).